We begin with the raw amino-acid sequence, 363 residues long: Fructose-1,6-bisphosphate aldolase/phosphatase (363 aa).

Catalysis depends on Asp11, which acts as the Proton acceptor; for FBP phosphatase activity. 4 residues coordinate Mg(2+): Asp11, His18, Asp51, and Asp52. Residue His18 participates in beta-D-fructose 1,6-bisphosphate binding. His18 provides a ligand contact to dihydroxyacetone phosphate. Position 89 (Tyr89) interacts with beta-D-fructose 1,6-bisphosphate. Gln93 contributes to the Mg(2+) binding site. Gly102–Asn103 is a binding site for beta-D-fructose 1,6-bisphosphate. Asp130 serves as a coordination point for Mg(2+). Position 131 (Lys131) interacts with beta-D-fructose 1,6-bisphosphate. Residue Lys131 participates in dihydroxyacetone phosphate binding. Catalysis depends on Tyr230, which acts as the Proton donor/acceptor; for FBP aldolase activity. The Mg(2+) site is built by Lys233, Asp234, and Asp235. The Schiff-base intermediate with DHAP; for FBP aldolase activity role is filled by Lys233. Beta-D-fructose 1,6-bisphosphate-binding positions include Gln243–Lys244, Arg267, and Tyr348. Arg267 lines the dihydroxyacetone phosphate pocket.

The protein belongs to the FBP aldolase/phosphatase family. As to quaternary structure, homooctamer; dimer of tetramers. It depends on Mg(2+) as a cofactor.

It carries out the reaction beta-D-fructose 1,6-bisphosphate + H2O = beta-D-fructose 6-phosphate + phosphate. It catalyses the reaction beta-D-fructose 1,6-bisphosphate = D-glyceraldehyde 3-phosphate + dihydroxyacetone phosphate. It functions in the pathway carbohydrate biosynthesis; gluconeogenesis. In terms of biological role, catalyzes two subsequent steps in gluconeogenesis: the aldol condensation of dihydroxyacetone phosphate (DHAP) and glyceraldehyde-3-phosphate (GA3P) to fructose-1,6-bisphosphate (FBP), and the dephosphorylation of FBP to fructose-6-phosphate (F6P). In Thermus thermophilus (strain ATCC BAA-163 / DSM 7039 / HB27), this protein is Fructose-1,6-bisphosphate aldolase/phosphatase.